The primary structure comprises 307 residues: Synaptophysin (307 aa).

Residues 1–19 lie on the Cytoplasmic side of the membrane; that stretch reads MDVVNQLVAGGQFRVVKEP. Positions 15–222 constitute an MARVEL domain; that stretch reads VVKEPLGFVK…NLWFVFKETG (208 aa). Residues 20–43 form a helical membrane-spanning segment; sequence LGFVKVLQWVFAIFAFATCGSYTG. Over 44–101 the chain is Vesicular; sequence ELRLSVECANKTESALNIEVEFEYPFRLHQVYFDAPSCVKGGTTKIFLVGDYSSSAEF. N-linked (GlcNAc...) asparagine glycosylation is present at asparagine 53. The residue at position 75 (tyrosine 75) is a Phosphotyrosine. The chain crosses the membrane as a helical span at residues 102 to 125; the sequence is FVTVAVFAFLYSMGALATYIFLQN. Over 126-132 the chain is Cytoplasmic; sequence KYRENNK. A helical membrane pass occupies residues 133–156; sequence GPMMDFLATAVFAFMWLVSSSAWA. Topologically, residues 157–194 are vesicular; that stretch reads KGLSDVKMATDPENIIKEMPMCRQTGNTCKELRDPVTS. Residues 195–218 traverse the membrane as a helical segment; it reads GLNTSVVFGFLNLVLWVGNLWFVF. Topologically, residues 219–307 are cytoplasmic; the sequence is KETGWAAPFM…GAPTSFSNQM (89 aa). At threonine 221 the chain carries Phosphothreonine. The segment at 233 to 307 is disordered; sequence GAPEKQPAPG…GAPTSFSNQM (75 aa). Residues 248–258 are compositionally biased toward gly residues; it reads AGYGQGPGGYG. The segment at 249–298 is repeats, Gly-rich; that stretch reads GYGQGPGGYGPQDSYGPQGGYQPDYGQPASGGGGYGPQGDYGQQGYGQQG. Low complexity predominate over residues 259 to 276; sequence PQDSYGPQGGYQPDYGQP. Phosphotyrosine occurs at positions 273 and 289. Positions 277–296 are enriched in gly residues; the sequence is ASGGGGYGPQGDYGQQGYGQ.

It belongs to the synaptophysin/synaptobrevin family. Homohexamer or homotetramer. Interacts with SRCIN1. Interacts with VAMP2; the interaction is inhibited by interaction of VAPM2 with SEPT8. Ubiquitinated; mediated by SIAH1 or SIAH2 and leading to its subsequent proteasomal degradation. Post-translationally, phosphorylated by SRC. As to expression, expressed in the brain with expression in the cerebrum and the cerebellum.

The protein resides in the cytoplasmic vesicle. It localises to the secretory vesicle. The protein localises to the synaptic vesicle membrane. Its subcellular location is the synapse. It is found in the synaptosome. Functionally, possibly involved in structural functions as organizing other membrane components or in targeting the vesicles to the plasma membrane. Involved in the regulation of short-term and long-term synaptic plasticity. This chain is Synaptophysin (Syp), found in Rattus norvegicus (Rat).